The following is a 70-amino-acid chain: MTIINSISSLGKITNKNKSQNNLNSINNSINPPNNIQGSNEKTGLVSGLLELVGGVVLILGLVVGATLGL.

Belongs to the UPF0519 family.

The polypeptide is UPF0519 protein B (sigN122) (Dictyostelium discoideum (Social amoeba)).